Consider the following 233-residue polypeptide: MADPSLNNPVVIQATRLDASILPRNVFSKSYLLYVIAQGTDVGAIAGKANEAGQGAYDAQVKNDEQDVELADHEARIKQLRIDVDDHESRITANTKAITALNVRVTTAEGEIASLQTNVSALDGRVTTAENNISALQADYVSKTATTSQSLASPLNVTTSYSVGGKKVLGARQTGWTAATGTANKGVFDADLTFAVSDTYTQSEIQAIANALITERRRTKALEDALRAHGLID.

The interaction with tail hub protein gp10 stretch occupies residues 2–60; that stretch reads ADPSLNNPVVIQATRLDASILPRNVFSKSYLLYVIAQGTDVGAIAGKANEAGQGAYDAQ. Trimerization heptad repeat repeat units lie at residues 61 to 67, 70 to 76, 77 to 83, 84 to 90, 91 to 97, 98 to 104, 105 to 111, 112 to 118, 119 to 125, 126 to 132, and 133 to 139; these read VKNDEQD, LADHEAR, IKQLRID, VDDHESR, ITANTKA, ITALNVR, VTTAEGE, IASLQTN, VSALDGR, VTTAENN, and ISALQAD. Residues 61–139 are a coiled coil; it reads VKNDEQDVEL…ENNISALQAD (79 aa). Positions 175-233 are inverted coiled coil; it reads GWTAATGTANKGVFDADLTFAVSDTYTQSEIQAIANALITERRRTKALEDALRAHGLID. A Basic cluster motif is present at residues 216-220; sequence RRRTK.

Belongs to the Lederbergvirus tail needle protein family. Homotrimer. The trimer forms an elongated coiled-coil (240A x 25A). The N-terminal tip may exist in a pre-ejection extended conformation, which may fold into a trimer of hairpins only after ejection into the host. Interacts (via N-terminus) with the tail hub gp10. Interacts with the head-to-tail adapter protein gp4.

The protein localises to the virion. Its function is as follows. Cell-perforating component and plug protein of the phage tail machine. Together with gp4 and gp10, gp26 is required for stabilization of the condensed DNA within the capsid by plugging the hole through which the DNA enters. Host cell membrane perforation allows viral DNA ejection. The needle penetrates the host outer membrane. The needle is released and the internal head protein gp7 is ejected to form an extra-cellular channel. In Salmonella typhimurium (Bacteriophage P22), this protein is Tail needle protein gp26 (26).